We begin with the raw amino-acid sequence, 805 residues long: Pentatricopeptide repeat-containing protein At4g01570 (805 aa).

16 PPR repeats span residues 91 to 125 (SATA…GVNL), 126 to 160 (DQTM…GDCL), 161 to 196 (NPSV…DNHS), 211 to 241 (GTVA…LKGM), 247 to 277 (DTWS…MKER), 288 to 322 (DICT…GHEP), 323 to 357 (DNST…GFVP), 358 to 392 (DTIV…GVRA), 393 to 427 (SCWT…GQFV), 428 to 462 (DAIT…GFSV), 463 to 497 (DLVT…NLVP), 593 to 627 (DVDM…GVTD), 629 to 663 (TSYT…FCAA), 664 to 698 (DIAT…GGYL), 699 to 733 (DIVM…GINP), and 734 to 768 (DVVS…GCLP).

The protein belongs to the PPR family. P subfamily.

This is Pentatricopeptide repeat-containing protein At4g01570 from Arabidopsis thaliana (Mouse-ear cress).